A 196-amino-acid chain; its full sequence is MSSNLHPVGGTGTGAAAPESVLNIVEEIAASGSVTAGLQAITSSPGMVNLLIGWAKTKFIQPIRESKLFQSRACQITLLVLGILLVVAGLACMFIFHSQLGANAFWLIIPAAIGLIKLLVTSLCFDEACTSEKLMVFQKWAGVLEDQLDDGILNNSNKIFGHVKTEGNTSRATTPVLNDGRGTPVLSPLVSKIARV.

Transmembrane regions (helical) follow at residues 34 to 54 (VTAG…LIGW), 76 to 96 (ITLL…MFIF), and 105 to 125 (FWLI…SLCF).

The protein localises to the membrane. The chain is Sulfur-rich protein (srp) from Chlamydia pneumoniae (Chlamydophila pneumoniae).